The chain runs to 192 residues: Anthranilate synthase component 2 (192 aa).

The Glutamine amidotransferase type-1 domain occupies 1 to 192 (MIVLVNNRDS…KNFVEMSRNG (192 aa)). Residue 50 to 52 (GPG) coordinates L-glutamine. The active-site Nucleophile; for GATase activity is Cys78. L-glutamine-binding positions include Gln82 and 127–128 (SL). Catalysis depends on for GATase activity residues His165 and Glu167.

As to quaternary structure, heterotetramer consisting of two non-identical subunits: a beta subunit (TrpG) and a large alpha subunit (TrpE).

It carries out the reaction chorismate + L-glutamine = anthranilate + pyruvate + L-glutamate + H(+). It functions in the pathway amino-acid biosynthesis; L-tryptophan biosynthesis; L-tryptophan from chorismate: step 1/5. Its function is as follows. Part of a heterotetrameric complex that catalyzes the two-step biosynthesis of anthranilate, an intermediate in the biosynthesis of L-tryptophan. In the first step, the glutamine-binding beta subunit (TrpG) of anthranilate synthase (AS) provides the glutamine amidotransferase activity which generates ammonia as a substrate that, along with chorismate, is used in the second step, catalyzed by the large alpha subunit of AS (TrpE) to produce anthranilate. In the absence of TrpG, TrpE can synthesize anthranilate directly from chorismate and high concentrations of ammonia. The protein is Anthranilate synthase component 2 (trpG) of Thermococcus kodakarensis (strain ATCC BAA-918 / JCM 12380 / KOD1) (Pyrococcus kodakaraensis (strain KOD1)).